A 307-amino-acid polypeptide reads, in one-letter code: Nucleotide-binding protein AAur_2084 (307 aa).

Positions 1-21 (MDEATAKSGTEQDGLTPVKPP) are disordered. Position 30-37 (30-37 (GMSGAGRS)) interacts with ATP. GTP is bound at residue 81-84 (DVRS).

It belongs to the RapZ-like family.

In terms of biological role, displays ATPase and GTPase activities. The protein is Nucleotide-binding protein AAur_2084 of Paenarthrobacter aurescens (strain TC1).